Here is a 353-residue protein sequence, read N- to C-terminus: Protein U67 (353 aa).

This sequence belongs to the herpesviridae UL95 family.

The polypeptide is Protein U67 (U67) (Homo sapiens (Human)).